A 222-amino-acid chain; its full sequence is UPF0758 protein YicR (222 aa).

An MPN domain is found at 100 to 222 (PLLSPEMTRE…YVSFAERGWI (123 aa)). Positions 171, 173, and 184 each coordinate Zn(2+). The JAMM motif signature appears at 171–184 (HNHPSGCAEPSKAD).

This sequence belongs to the UPF0758 family. YicR subfamily.

This is UPF0758 protein YicR from Escherichia coli (strain K12 / MC4100 / BW2952).